A 372-amino-acid chain; its full sequence is MDNHQLANVIPASEYGRILASGHPIMDVRAPIEFTKGAFPASSNHPLMRDDERQQVGTCYKEHGQDAAIALGHSLVCGAVKQQRVDAWLAYLDAHPDAYLYCFRGGLRSQLTQQWLAEAGRDVPYIQGGYKAMRQYLIDTIDRAPEARPMLILSGITGSGKTDFLLQRQEAVDLEGLAHHRGSSFGRYHEGQPTQINFENSLGVALLKHQQSPARILLLEDESYLIGRSALPKAFYMGMQAASVVILEEPLEARLTRLLDEYVHKMHRGYVERLGEEAGFEAFAEYLANSISGIKKRLGGKQHDELQQMITDALAVQTQRGDTQAHLEWIALLLSKYYDPMYQYQIGKKADRVIFQGDHQAMHQWLDEYATR.

The Rhodanese domain maps to 19–142; that stretch reads LASGHPIMDV…MRQYLIDTID (124 aa). The active-site S-selanylcysteine intermediate is the Cys-102.

This sequence belongs to the SelU family. As to quaternary structure, monomer.

It catalyses the reaction 5-methylaminomethyl-2-thiouridine(34) in tRNA + selenophosphate + (2E)-geranyl diphosphate + H2O + H(+) = 5-methylaminomethyl-2-selenouridine(34) in tRNA + (2E)-thiogeraniol + phosphate + diphosphate. It carries out the reaction 5-methylaminomethyl-2-thiouridine(34) in tRNA + (2E)-geranyl diphosphate = 5-methylaminomethyl-S-(2E)-geranyl-thiouridine(34) in tRNA + diphosphate. The catalysed reaction is 5-methylaminomethyl-S-(2E)-geranyl-thiouridine(34) in tRNA + selenophosphate + H(+) = 5-methylaminomethyl-2-(Se-phospho)selenouridine(34) in tRNA + (2E)-thiogeraniol. The enzyme catalyses 5-methylaminomethyl-2-(Se-phospho)selenouridine(34) in tRNA + H2O = 5-methylaminomethyl-2-selenouridine(34) in tRNA + phosphate. Functionally, involved in the post-transcriptional modification of the uridine at the wobble position (U34) of tRNA(Lys), tRNA(Glu) and tRNA(Gln). Catalyzes the conversion of 2-thiouridine (S2U-RNA) to 2-selenouridine (Se2U-RNA). Acts in a two-step process involving geranylation of 2-thiouridine (S2U) to S-geranyl-2-thiouridine (geS2U) and subsequent selenation of the latter derivative to 2-selenouridine (Se2U) in the tRNA chain. The protein is tRNA 2-selenouridine synthase of Shewanella loihica (strain ATCC BAA-1088 / PV-4).